The sequence spans 968 residues: Alanine--tRNA ligase, cytoplasmic (968 aa).

At methionine 1 the chain carries N-acetylmethionine. Phosphoserine is present on residues serine 3 and serine 8. Lysine 19 bears the N6-acetyllysine mark. Residues arginine 77, histidine 95, tryptophan 176, and 214-216 (IWN) each bind ATP. Positions 216 and 239 each coordinate L-alanine. ATP is bound at residue glycine 243. 2 positions are modified to phosphoserine: serine 399 and serine 555. Positions 605, 609, 723, and 727 each coordinate Zn(2+). Positions 750-763 (RRIVAVTGAEAQKA) match the Nuclear localization signal motif. Position 876 is an N6-acetyllysine (lysine 876). Lysine 943 carries the N6,N6,N6-trimethyllysine; alternate modification. N6,N6-dimethyllysine; alternate is present on lysine 943. Lysine 943 carries the N6-methyllysine; alternate modification.

It belongs to the class-II aminoacyl-tRNA synthetase family. Monomer. Interacts with ANKRD16; the interaction is direct. Requires Zn(2+) as cofactor. Post-translationally, ISGylated. Methylation at 'Lys-943' by METTL21C.

It is found in the cytoplasm. The protein localises to the nucleus. It catalyses the reaction tRNA(Ala) + L-alanine + ATP = L-alanyl-tRNA(Ala) + AMP + diphosphate. It carries out the reaction (S)-lactate + ATP + H(+) = (S)-lactoyl-AMP + diphosphate. The enzyme catalyses (S)-lactoyl-AMP + L-lysyl-[protein] = N(6)-[(S)-lactoyl]-L-lysyl-[protein] + AMP + 2 H(+). With respect to regulation, the protein lactyltransferase activity is inhibited by beta-alanine. Functionally, catalyzes the attachment of alanine to tRNA(Ala) in a two-step reaction: alanine is first activated by ATP to form Ala-AMP and then transferred to the acceptor end of tRNA(Ala). Also edits incorrectly charged tRNA(Ala) via its editing domain. In presence of high levels of lactate, also acts as a protein lactyltransferase that mediates lactylation of lysine residues in target proteins, such as TEAD1, TP53/p53 and YAP1. Protein lactylation takes place in a two-step reaction: lactate is first activated by ATP to form lactate-AMP and then transferred to lysine residues of target proteins. Acts as an inhibitor of TP53/p53 activity by catalyzing lactylation of TP53/p53. Acts as a positive regulator of the Hippo pathway by mediating lactylation of TEAD1 and YAP1. The chain is Alanine--tRNA ligase, cytoplasmic (AARS1) from Pongo abelii (Sumatran orangutan).